We begin with the raw amino-acid sequence, 180 residues long: Translation initiation factor IF-3 (180 aa).

Belongs to the IF-3 family. As to quaternary structure, monomer.

The protein localises to the cytoplasm. In terms of biological role, IF-3 binds to the 30S ribosomal subunit and shifts the equilibrium between 70S ribosomes and their 50S and 30S subunits in favor of the free subunits, thus enhancing the availability of 30S subunits on which protein synthesis initiation begins. This Xylella fastidiosa (strain Temecula1 / ATCC 700964) protein is Translation initiation factor IF-3.